A 785-amino-acid polypeptide reads, in one-letter code: Solute carrier family 45 member 4 (785 aa).

The tract at residues 1–43 (MKMAPQNADSESMQVQELPVPLPDPQKPRDPEAETQEETTSEG) is disordered. 6 consecutive transmembrane segments (helical) span residues 64–84 (EFCY…IGLP), 87–107 (YYSL…PLIG), 124–144 (ILAL…GSAI), 156–176 (PIGI…ADAT), 197–217 (LNIH…LGGL), and 234–254 (VLFF…LFSI). Disordered regions lie at residues 259–309 (YSPQ…VQSE) and 401–430 (KVPN…SGSM). Ser442 and Ser472 each carry phosphoserine. Residues 478-505 (DLQQRQRSRHRNQSGATASSGDTESEEG) are disordered. Low complexity predominate over residues 490–499 (QSGATASSGD). A Phosphoserine modification is found at Ser502. 6 helical membrane passes run 525-545 (LMWL…EAVF), 577-597 (MGCW…ALLQ), 609-629 (IIYM…AMFP), 631-651 (VYVA…ISYC), 683-703 (ILSC…GGVV), and 709-729 (IVVI…TATF). The tract at residues 741–772 (KEEQKGLSSGPAGEGEGGAGSEKPTVLKLSRK) is disordered. Ser749 carries the phosphoserine modification.

This sequence belongs to the glycoside-pentoside-hexuronide (GPH) cation symporter transporter (TC 2.A.2) family. Ubiquitously expressed.

The protein localises to the membrane. The enzyme catalyses sucrose(out) + H(+)(out) = sucrose(in) + H(+)(in). Proton-associated sucrose transporter. May be able to transport also glucose and fructose. The sequence is that of Solute carrier family 45 member 4 (Slc45a4) from Mus musculus (Mouse).